The primary structure comprises 258 residues: Large ribosomal subunit protein eL8z (258 aa).

Residues 1 to 20 are disordered; the sequence is MAPKRGGRAPVPAKKKTEKV.

Belongs to the eukaryotic ribosomal protein eL8 family.

The protein is Large ribosomal subunit protein eL8z (RPL7A-1) of Oryza sativa subsp. japonica (Rice).